The chain runs to 272 residues: 4-hydroxy-tetrahydrodipicolinate reductase (272 aa).

NAD(+)-binding positions include 10 to 15, Glu-36, 100 to 102, and 124 to 127; these read GAGGRM, GTT, and SGNM. Residue His-157 is the Proton donor/acceptor of the active site. Residue His-158 participates in (S)-2,3,4,5-tetrahydrodipicolinate binding. Lys-161 serves as the catalytic Proton donor. 167–168 provides a ligand contact to (S)-2,3,4,5-tetrahydrodipicolinate; the sequence is GT.

This sequence belongs to the DapB family.

It is found in the cytoplasm. The enzyme catalyses (S)-2,3,4,5-tetrahydrodipicolinate + NAD(+) + H2O = (2S,4S)-4-hydroxy-2,3,4,5-tetrahydrodipicolinate + NADH + H(+). The catalysed reaction is (S)-2,3,4,5-tetrahydrodipicolinate + NADP(+) + H2O = (2S,4S)-4-hydroxy-2,3,4,5-tetrahydrodipicolinate + NADPH + H(+). The protein operates within amino-acid biosynthesis; L-lysine biosynthesis via DAP pathway; (S)-tetrahydrodipicolinate from L-aspartate: step 4/4. Its function is as follows. Catalyzes the conversion of 4-hydroxy-tetrahydrodipicolinate (HTPA) to tetrahydrodipicolinate. The protein is 4-hydroxy-tetrahydrodipicolinate reductase of Afipia carboxidovorans (strain ATCC 49405 / DSM 1227 / KCTC 32145 / OM5) (Oligotropha carboxidovorans).